A 332-amino-acid chain; its full sequence is Sphingolipid delta(4)-desaturase DES1-like (332 aa).

3 helical membrane passes run 55–75, 83–103, and 119–139; these read PWAFLKITLVVILQLSTAAIL, ILSIAYFFGSFLNHNLFLAIH, and CLGIFANLPIGVPMSVTFQKY. The short motif at 103 to 107 is the Histidine box-1 element; that stretch reads HELSH. Positions 140-144 match the Histidine box-2 motif; it reads HLEHH. 3 consecutive transmembrane segments (helical) span residues 164 to 184, 197 to 217, and 222 to 242; these read LVTNIFAKTIWVFLQLFFYAL, WEFINFLIQIVLDVSVVLFFG, and AYLILSTFVGGGMHPMAGHFI. A Histidine box-3 motif is present at residues 271–275; that stretch reads HNEHH.

The protein belongs to the fatty acid desaturase type 1 family. DEGS subfamily. In terms of tissue distribution, specifically expressed in flowers.

It localises to the endoplasmic reticulum membrane. It catalyses the reaction an N-acylsphinganine + 2 Fe(II)-[cytochrome b5] + O2 + 2 H(+) = an N-acylsphing-4-enine + 2 Fe(III)-[cytochrome b5] + 2 H2O. Functionally, sphingolipid-delta-4-desaturase required for the biosynthesis of delta-4-unsaturated sphingolipids and derivatives. May be required for the biosynthesis of glucosylceramides. This chain is Sphingolipid delta(4)-desaturase DES1-like, found in Arabidopsis thaliana (Mouse-ear cress).